The primary structure comprises 465 residues: Methionine aminopeptidase 2-1 (465 aa).

Residues 1–100 (MGSKTAENES…QSSPPRIPLA (100 aa)) form a disordered region. Positions 31–40 (RGAHWSRDGD) are enriched in basic and acidic residues. The span at 75-87 (SKKRKKRPKKKTS) shows a compositional bias: basic residues. Residue histidine 216 participates in substrate binding. Positions 237, 248, and 317 each coordinate a divalent metal cation. Position 325 (histidine 325) interacts with substrate. 2 residues coordinate a divalent metal cation: glutamate 350 and glutamate 446.

Belongs to the peptidase M24A family. Methionine aminopeptidase eukaryotic type 2 subfamily. It depends on Co(2+) as a cofactor. The cofactor is Zn(2+). Mn(2+) is required as a cofactor. Fe(2+) serves as cofactor.

Its subcellular location is the cytoplasm. It catalyses the reaction Release of N-terminal amino acids, preferentially methionine, from peptides and arylamides.. Cotranslationally removes the N-terminal methionine from nascent proteins. The N-terminal methionine is often cleaved when the second residue in the primary sequence is small and uncharged (Met-Ala-, Cys, Gly, Pro, Ser, Thr, or Val). This is Methionine aminopeptidase 2-1 from Penicillium rubens (strain ATCC 28089 / DSM 1075 / NRRL 1951 / Wisconsin 54-1255) (Penicillium chrysogenum).